Consider the following 265-residue polypeptide: Mlc titration factor A (265 aa).

Zn(2+) is bound by residues His111, His148, His152, and Glu211.

Belongs to the MtfA family. In terms of assembly, interacts with Mlc. Zn(2+) serves as cofactor.

It localises to the cytoplasm. Functionally, involved in the modulation of the activity of the glucose-phosphotransferase system (glucose-PTS). Interacts with the transcriptional repressor Mlc, preventing its interaction with DNA and leading to the modulation of expression of genes regulated by Mlc, including ptsG, which encodes the PTS system glucose-specific EIICB component. In terms of biological role, shows zinc-dependent metallopeptidase activity. This Salmonella paratyphi A (strain AKU_12601) protein is Mlc titration factor A.